Here is a 144-residue protein sequence, read N- to C-terminus: UPF0179 protein PF1381 (144 aa).

It belongs to the UPF0179 family.

In Pyrococcus furiosus (strain ATCC 43587 / DSM 3638 / JCM 8422 / Vc1), this protein is UPF0179 protein PF1381.